A 155-amino-acid polypeptide reads, in one-letter code: Peptidyl-prolyl cis-trans isomerase ppi1 (155 aa).

The PPIase cyclophilin-type domain occupies 1-154; sequence MANVELQTSL…EPLKIIKAVA (154 aa).

The protein belongs to the cyclophilin-type PPIase family. PPIL1 subfamily. In terms of assembly, interacts with cwf13/snw1.

The catalysed reaction is [protein]-peptidylproline (omega=180) = [protein]-peptidylproline (omega=0). In terms of biological role, PPIases accelerate the folding of proteins. It catalyzes the cis-trans isomerization of proline imidic peptide bonds in oligopeptides. The protein is Peptidyl-prolyl cis-trans isomerase ppi1 (ppi1) of Schizosaccharomyces pombe (strain 972 / ATCC 24843) (Fission yeast).